Consider the following 162-residue polypeptide: Disulfide bond formation protein B (162 aa).

At 1–8 (MTPLFRKA) the chain is on the cytoplasmic side. Residues 9–25 (VWLLFAVSVCAFAGSLA) form a helical membrane-spanning segment. At 26 to 43 (AQYVLGMEPCVLCISQRL) the chain is on the periplasmic side. Cys-35 and Cys-38 are oxidised to a cystine. A helical membrane pass occupies residues 44–60 (CVLATALCAAVVLACKP). Topologically, residues 61 to 67 (KGRVGGL) are cytoplasmic. The helical transmembrane segment at 68-85 (SGAVFISIPAVTGISVAA) threads the bilayer. The Periplasmic segment spans residues 86 to 141 (YQLWLQSLPPGAAPSCGAPWTFRLKGWPLFDWFEPVVRGFGNCAEPDYLLGVALPV). Cys-101 and Cys-128 form a disulfide bridge. Residues 142–160 (WSAAYFLAVVLTVWWAWAR) traverse the membrane as a helical segment. Residues 161–162 (AK) lie on the Cytoplasmic side of the membrane.

It belongs to the DsbB family.

The protein localises to the cell inner membrane. Its function is as follows. Required for disulfide bond formation in some periplasmic proteins. Acts by oxidizing the DsbA protein. The chain is Disulfide bond formation protein B from Neisseria gonorrhoeae (strain ATCC 700825 / FA 1090).